We begin with the raw amino-acid sequence, 362 residues long: 3-dehydroquinate synthase (362 aa).

NAD(+) contacts are provided by residues 74 to 79 (DGEGYK), 108 to 112 (GVIGD), 132 to 133 (TT), Lys145, Lys154, and 172 to 175 (TLDT). 3 residues coordinate Zn(2+): Glu187, His250, and His267.

It belongs to the sugar phosphate cyclases superfamily. Dehydroquinate synthase family. It depends on Co(2+) as a cofactor. Requires Zn(2+) as cofactor. NAD(+) is required as a cofactor.

The protein localises to the cytoplasm. The enzyme catalyses 7-phospho-2-dehydro-3-deoxy-D-arabino-heptonate = 3-dehydroquinate + phosphate. The protein operates within metabolic intermediate biosynthesis; chorismate biosynthesis; chorismate from D-erythrose 4-phosphate and phosphoenolpyruvate: step 2/7. Catalyzes the conversion of 3-deoxy-D-arabino-heptulosonate 7-phosphate (DAHP) to dehydroquinate (DHQ). The chain is 3-dehydroquinate synthase from Geobacter sp. (strain M21).